The following is a 452-amino-acid chain: Lipase member H (452 aa).

The first 16 residues, 1–16 (MLRFYLFISLLCLVRS), serve as a signal peptide directing secretion. N-linked (GlcNAc...) asparagine glycosylation is found at Asn-50, Asn-66, and Asn-122. The active-site Nucleophile is the Ser-154. The active-site Charge relay system is Asp-178. An intrachain disulfide couples Cys-233 to Cys-247. The Charge relay system role is filled by His-249. Asn-263 is a glycosylation site (N-linked (GlcNAc...) asparagine). Cystine bridges form between Cys-271/Cys-282, Cys-285/Cys-293, and Cys-428/Cys-447.

Belongs to the AB hydrolase superfamily. Lipase family. As to quaternary structure, interacts with TTMP/C3orf52. Expressed in liver and lacrimal gland.

The protein localises to the secreted. It localises to the cell membrane. It catalyses the reaction 1-hexadecanoyl-2-(9Z-octadecenoyl)-sn-glycero-3-phosphate + H2O = 2-(9Z-octadecenoyl)-sn-glycero-3-phosphate + hexadecanoate + H(+). In terms of biological role, hydrolyzes specifically phosphatidic acid (PA) to produce 2-acyl lysophosphatidic acid (LPA; a potent bioactive lipid mediator) and fatty acid. Does not hydrolyze other phospholipids, like phosphatidylserine (PS), phosphatidylcholine (PC) and phosphatidylethanolamine (PE) or triacylglycerol (TG). The polypeptide is Lipase member H (LIPH) (Oryctolagus cuniculus (Rabbit)).